The sequence spans 438 residues: Putative truncated GMC-type inactive oxidoreductase L894 (438 aa).

The signal sequence occupies residues 1–26 (MYVFLLFSRYKIFYVYIKKMAHRSRC). Residue 79-109 (DIVIIGAGAAGCVLAYYLTKFSDLKIILLEA) participates in FAD binding.

The protein belongs to the GMC oxidoreductase family. FAD is required as a cofactor.

Its subcellular location is the virion. The polypeptide is Putative truncated GMC-type inactive oxidoreductase L894 (Acanthamoeba polyphaga (Amoeba)).